We begin with the raw amino-acid sequence, 198 residues long: MAKVLVLYYSAYGHIETMAYAVAEGAKSAGAEVTVKRVPELVPEDVAKASYYKVDQAAPIATVDELADYDAIIVGAGTRFGTVASQMRNFWDQTGGLWFAGKLVGKLGSVFTSSATQHGGQESTILGFIPTFLHQGMVVAGLPYAFQGQMGTEEVKGGSPYGASTITNGDGSRQPSEIELEGAKYQGAHVAKLAAKLA.

The 187-residue stretch at 4 to 190 (VLVLYYSAYG…EGAKYQGAHV (187 aa)) folds into the Flavodoxin-like domain. FMN-binding positions include 10-15 (SAYGHI) and 78-80 (TRF). Y12 contributes to the NAD(+) binding site. W98 provides a ligand contact to substrate. Residues 113 to 119 (SSATQHG) and H134 contribute to the FMN site.

This sequence belongs to the WrbA family. Requires FMN as cofactor.

The catalysed reaction is a quinone + NADH + H(+) = a quinol + NAD(+). The enzyme catalyses a quinone + NADPH + H(+) = a quinol + NADP(+). The chain is NAD(P)H dehydrogenase (quinone) from Rhizobium johnstonii (strain DSM 114642 / LMG 32736 / 3841) (Rhizobium leguminosarum bv. viciae).